A 188-amino-acid polypeptide reads, in one-letter code: uncharacterized protein (188 aa).

Positions 57–80 (NDDVAPVAEGPKQERRSPSRNIGR) are disordered.

The protein belongs to the transposase 25 family.

This is an uncharacterized protein from Sinorhizobium fredii (strain NBRC 101917 / NGR234).